The following is a 64-amino-acid chain: Large ribosomal subunit protein bL33 (64 aa).

It belongs to the bacterial ribosomal protein bL33 family.

This Thermosynechococcus vestitus (strain NIES-2133 / IAM M-273 / BP-1) protein is Large ribosomal subunit protein bL33.